The primary structure comprises 538 residues: Mitochondria-eating protein (538 aa).

The interaction with YWHAG/14-3-3 protein gamma stretch occupies residues 1–273; it reads MAENLKRLVS…PRSRSCSRSR (273 aa). Serine 85 is modified (phosphoserine). The interval 92-137 is disordered; it reads GKPVDSKVPSLQNTFDRERRKDPSPRDRDMQQLDSNLNSTRSQLNQ. The span at 106–122 shows a compositional bias: basic and acidic residues; it reads FDRERRKDPSPRDRDMQ. 2 coiled-coil regions span residues 118–186 and 220–256; these read DRDM…ARHR and QRDT…RSSR. Residues 123–137 show a composition bias toward polar residues; sequence QLDSNLNSTRSQLNQ. 2 positions are modified to phosphoserine: serine 156 and serine 159. Disordered regions lie at residues 174-227 and 247-292; these read LKTL…EVTS and KSAL…NRSK. Basic and acidic residues-rich tracts occupy residues 181-209 and 216-227; these read EDAR…RRCE and RNADQRDTEVTS. A compositionally biased stretch (low complexity) spans 253 to 278; that stretch reads RSSRSRSPSPAPRSRSCSRSRSASPS. Phosphoserine is present on residues serine 285, serine 287, and serine 509.

Belongs to the MIEAP family. Interacts (via coiled-coil domains) with BNIP3L (via BH3 domain). Interacts (via coiled-coil domains) with BNIP3 (via BH3 domain). Interacts with YWHAG/14-3-3 protein gamma; a protein that also plays a role in MALM.

It is found in the cytoplasm. Its subcellular location is the cytosol. It localises to the mitochondrion outer membrane. The protein localises to the mitochondrion matrix. In terms of biological role, key regulator of mitochondrial quality that mediates the repairing or degradation of unhealthy mitochondria in response to mitochondrial damage. Mediator of mitochondrial protein catabolic process (also named MALM) by mediating the degradation of damaged proteins inside mitochondria by promoting the accumulation in the mitochondrial matrix of hydrolases that are characteristic of the lysosomal lumen. Also involved in mitochondrion degradation of damaged mitochondria by promoting the formation of vacuole-like structures (named MIV), which engulf and degrade unhealthy mitochondria by accumulating lysosomes. The physical interaction of SPATA18/MIEAP, BNIP3 and BNIP3L/NIX at the mitochondrial outer membrane regulates the opening of a pore in the mitochondrial double membrane in order to mediate the translocation of lysosomal proteins from the cytoplasm to the mitochondrial matrix. Binds cardiolipin. May form molecular condensates (non-membrane-bounded organelles) within mitochondria that compartmentalize and promote cardiolipin metabolism. The chain is Mitochondria-eating protein (SPATA18) from Macaca fascicularis (Crab-eating macaque).